The primary structure comprises 326 residues: MKKKIAIAMGGYSSEYRISINSGNIVYKHLDHDLYEPYRVHILKGEWFVVADDDTPYPINKSNFTVKINDKVIQFDCVFNTIHGTPGENGLLQAYLELIGIPQTSCDYYQSALTFNKRDLISVLRPYGIKAATNYFLNKDQEINTKEIVDKVGLPCFVKANRAGSSFGVTKVKTEDEIISAAKTAFTEDDEAIIESFLDGTEVSVGVITYKGKVLALPVTEIIPDGEFFDYEAKYLGKSQEITPARISEEDTKKVQDIAIMIYKKLKMKGLSRSEFIFHEGEPHFIEMNTNPGISQASILPQQAEKAGISLKDLFGSTIEAALNQK.

The ATP-grasp domain maps to 121 to 320 (ISVLRPYGIK…LKDLFGSTIE (200 aa)). 149-204 (VDKVGLPCFVKANRAGSSFGVTKVKTEDEIISAAKTAFTEDDEAIIESFLDGTEVS) contacts ATP. Positions 275, 287, and 289 each coordinate Mg(2+).

The protein belongs to the D-alanine--D-alanine ligase family. The cofactor is Mg(2+). It depends on Mn(2+) as a cofactor.

The protein resides in the cytoplasm. The enzyme catalyses 2 D-alanine + ATP = D-alanyl-D-alanine + ADP + phosphate + H(+). It functions in the pathway cell wall biogenesis; peptidoglycan biosynthesis. Its function is as follows. Cell wall formation. This is D-alanine--D-alanine ligase from Christiangramia forsetii (strain DSM 17595 / CGMCC 1.15422 / KT0803) (Gramella forsetii).